We begin with the raw amino-acid sequence, 75 residues long: Gas vesicle protein S (75 aa).

This sequence belongs to the gas vesicle GvpA family.

Its subcellular location is the gas vesicle. In terms of biological role, probably a minor component of the gas vesicle. Gas vesicles are hollow, gas filled proteinaceous nanostructures found in some microorganisms. It is not clear what function gas vesicles perform in soil bacteria. This Streptomyces sp. (strain CB03234) protein is Gas vesicle protein S.